Consider the following 490-residue polypeptide: Cobyric acid synthase (490 aa).

Residues 253–440 (KLRVAAPAAP…LHGVFDEPAA (188 aa)) enclose the GATase cobBQ-type domain. Residue Cys-334 is the Nucleophile of the active site. His-432 is an active-site residue.

The protein belongs to the CobB/CobQ family. CobQ subfamily.

It participates in cofactor biosynthesis; adenosylcobalamin biosynthesis. Functionally, catalyzes amidations at positions B, D, E, and G on adenosylcobyrinic A,C-diamide. NH(2) groups are provided by glutamine, and one molecule of ATP is hydrogenolyzed for each amidation. This chain is Cobyric acid synthase, found in Chromobacterium violaceum (strain ATCC 12472 / DSM 30191 / JCM 1249 / CCUG 213 / NBRC 12614 / NCIMB 9131 / NCTC 9757 / MK).